A 439-amino-acid chain; its full sequence is Phosphomethylpyrimidine synthase (439 aa).

Residues N67, M96, Y126, H165, 187 to 189, 228 to 231, and E267 contribute to the substrate site; these read SRG and DSLR. H271 is a Zn(2+) binding site. Y294 is a substrate binding site. H335 contributes to the Zn(2+) binding site. 3 residues coordinate [4Fe-4S] cluster: C411, C414, and C418.

It belongs to the ThiC family. Requires [4Fe-4S] cluster as cofactor.

The catalysed reaction is 5-amino-1-(5-phospho-beta-D-ribosyl)imidazole + S-adenosyl-L-methionine = 4-amino-2-methyl-5-(phosphooxymethyl)pyrimidine + CO + 5'-deoxyadenosine + formate + L-methionine + 3 H(+). It functions in the pathway cofactor biosynthesis; thiamine diphosphate biosynthesis. Functionally, catalyzes the synthesis of the hydroxymethylpyrimidine phosphate (HMP-P) moiety of thiamine from aminoimidazole ribotide (AIR) in a radical S-adenosyl-L-methionine (SAM)-dependent reaction. This is Phosphomethylpyrimidine synthase from Ignicoccus hospitalis (strain KIN4/I / DSM 18386 / JCM 14125).